The following is a 215-amino-acid chain: Chloramphenicol acetyltransferase (215 aa).

H189 serves as the catalytic Proton acceptor.

The protein belongs to the chloramphenicol acetyltransferase family. In terms of assembly, homotrimer.

The catalysed reaction is chloramphenicol + acetyl-CoA = chloramphenicol 3-acetate + CoA. In terms of biological role, this enzyme is an effector of chloramphenicol resistance in bacteria. The chain is Chloramphenicol acetyltransferase (cat) from Staphylococcus intermedius.